A 985-amino-acid polypeptide reads, in one-letter code: Serine/threonine-protein kinase N2 (985 aa).

The region spanning K33–V109 is the REM-1 1 domain. At K77 the chain carries N6-acetyllysine. The residue at position 110 (S110) is a Phosphoserine. A disordered region spans residues D111–N136. Residues T121 and T124 each carry the phosphothreonine modification. The span at T121–N136 shows a compositional bias: low complexity. REM-1 domains follow at residues T121–L204 and D207–K286. S303, S307, S361, and S363 each carry phosphoserine. The segment at A352–N383 is disordered. The C2 domain occupies S354–F474. The span at R366–R382 shows a compositional bias: low complexity. Residues N383–A464 are necessary to rescue apical junction formation. A phosphoserine mark is found at S536, S584, S621, and S632. The tract at residues D570–D590 is disordered. The 260-residue stretch at F658–F917 folds into the Protein kinase domain. ATP contacts are provided by residues L664–V672 and K687. The active-site Proton acceptor is D783. T817 carries the post-translational modification Phosphothreonine; by PDPK1. The segment at R918–F978 is necessary for the catalytic activity. In terms of domain architecture, AGC-kinase C-terminal spans R918–C985. The residue at position 953 (S953) is a Phosphoserine. T959 bears the Phosphothreonine mark. Residues D979–C985 are negatively regulates the responsiveness of the catalytic activity by cardiolipin and is required for optimal activation by the GTP-bound RhoA.

It belongs to the protein kinase superfamily. AGC Ser/Thr protein kinase family. PKC subfamily. As to quaternary structure, interacts (via the REM repeats) with RHOA (GTP-bound form preferentially) and interacts (via the REM repeats) with RAC1 (GTP-bound form preferentially); the interactions induce its autophosphorylation. Interacts with RHOC. Interacts with NCK1 (via SH3 domains) and NCK2. Interacts with CD44. Interacts (via C-terminal kinase domain) with PDPK1; the interaction stimulates PDPK1 kinase activity. Interacts with MAP3K2; the interaction activates PRK2 kinase activity in a MAP3K2-independent kinase activity. Interacts (via C-terminal domain) with AKT1; the interaction occurs with the C-terminal cleavage product of PRK2 in apoptotic cells. Interacts (via C-terminus) with PTPN13 (via PDZ 3 domain). Interacts with CDK10. Phosphorylated during mitosis. Autophosphorylated. Phosphorylated. Binding to Rho and Rac promotes autophosphorylation and phosphorylation on serine and threonine residues. Phosphorylated by CDK10. In terms of processing, proteolytically cleaved by caspase-3 during the induction of apoptotic cell death. Activated by limited proteolysis with trypsin. In terms of tissue distribution, expressed in liver (at protein level).

It is found in the cytoplasm. It localises to the nucleus. Its subcellular location is the membrane. The protein resides in the cell projection. The protein localises to the lamellipodium. It is found in the cytoskeleton. It localises to the cleavage furrow. Its subcellular location is the midbody. The protein resides in the cell junction. It carries out the reaction L-seryl-[protein] + ATP = O-phospho-L-seryl-[protein] + ADP + H(+). The catalysed reaction is L-threonyl-[protein] + ATP = O-phospho-L-threonyl-[protein] + ADP + H(+). Kinase activity is activated upon binding to GTP-bound Rho1/Rac1 GTPases. Activated by caspase-3 (CASP3) cleavage during apoptosis. Activated by lipids, particularly cardiolipin and to a lesser extent by other acidic phospholipids and unsaturated fatty acids. Two specific sites, Thr-817 (activation loop of the kinase domain) and Thr-959 (turn motif), need to be phosphorylated for its full activation. In terms of biological role, PKC-related serine/threonine-protein kinase and Rho/Rac effector protein that participates in specific signal transduction responses in the cell. Plays a role in the regulation of cell cycle progression, actin cytoskeleton assembly, cell migration, cell adhesion, tumor cell invasion and transcription activation signaling processes. Phosphorylates CTTN in hyaluronan-induced astrocytes and hence decreases CTTN ability to associate with filamentous actin. Phosphorylates HDAC5, therefore lead to impair HDAC5 import. Direct RhoA target required for the regulation of the maturation of primordial junctions into apical junction formation in bronchial epithelial cells. Required for G2/M phases of the cell cycle progression and abscission during cytokinesis in a ECT2-dependent manner. Stimulates FYN kinase activity that is required for establishment of skin cell-cell adhesion during keratinocytes differentiation. Regulates epithelial bladder cells speed and direction of movement during cell migration and tumor cell invasion. Inhibits Akt pro-survival-induced kinase activity. Mediates Rho protein-induced transcriptional activation via the c-fos serum response factor (SRF). Involved in the negative regulation of ciliogenesis. The protein is Serine/threonine-protein kinase N2 (Pkn2) of Rattus norvegicus (Rat).